The following is a 356-amino-acid chain: MRVAVGMSGGVDSSVTALLLKEQGHDVIRVTLRFHTVEACEVNETHNVCCSPKDVQDASRVAKRLGIPHLVFSWEEIFKSKVIDYFVEEYKRGRTPNPCALCNREVKTGFFARYLKQVADIDKLATGHYAKIEEDKKYGLVIKRPKDRKRDQTYFLSLVRREDLELLTFPLGAYTKEEVREIAKRYGLEVAQKRDSQEVCFLMGKSPGEYLEGILGKQRGLIKHVSGKVLGEHEGVYRYTIGQRRGLGISYGKPVYVIDIDAKTNTLIVGEEEYLYNDKLLVKEINFHVPLEKWENVSAQIRYRHKPVPVERIEKTEEGFLVKFKEDVRGITPGQVVAFYDGDVLLGGGIIEESVK.

Residues 6–13 and Leu-32 each bind ATP; that span reads GMSGGVDS. The active-site Nucleophile is Cys-102. Cysteines 102 and 200 form a disulfide. ATP is bound at residue Gly-127. Residues 150–152 are interaction with tRNA; it reads RDQ. Cys-200 functions as the Cysteine persulfide intermediate in the catalytic mechanism. An interaction with tRNA region spans residues 302–303; that stretch reads RY.

Belongs to the MnmA/TRMU family.

Its subcellular location is the cytoplasm. The enzyme catalyses S-sulfanyl-L-cysteinyl-[protein] + uridine(34) in tRNA + AH2 + ATP = 2-thiouridine(34) in tRNA + L-cysteinyl-[protein] + A + AMP + diphosphate + H(+). In terms of biological role, catalyzes the 2-thiolation of uridine at the wobble position (U34) of tRNA, leading to the formation of s(2)U34. The polypeptide is tRNA-specific 2-thiouridylase MnmA (Aquifex aeolicus (strain VF5)).